A 117-amino-acid polypeptide reads, in one-letter code: uncharacterized protein (117 aa).

A signal peptide spans 1 to 23 (MVSEAEFMAALAKFAETSATASA).

This is an uncharacterized protein from Archaeoglobus fulgidus (strain ATCC 49558 / DSM 4304 / JCM 9628 / NBRC 100126 / VC-16).